Consider the following 276-residue polypeptide: Bifunctional protein FolD 1 (276 aa).

Residues 161–163 (GRG), Ser186, and Thr227 each bind NADP(+).

This sequence belongs to the tetrahydrofolate dehydrogenase/cyclohydrolase family. Homodimer.

It catalyses the reaction (6R)-5,10-methylene-5,6,7,8-tetrahydrofolate + NADP(+) = (6R)-5,10-methenyltetrahydrofolate + NADPH. It carries out the reaction (6R)-5,10-methenyltetrahydrofolate + H2O = (6R)-10-formyltetrahydrofolate + H(+). It participates in one-carbon metabolism; tetrahydrofolate interconversion. Functionally, catalyzes the oxidation of 5,10-methylenetetrahydrofolate to 5,10-methenyltetrahydrofolate and then the hydrolysis of 5,10-methenyltetrahydrofolate to 10-formyltetrahydrofolate. This chain is Bifunctional protein FolD 1, found in Frankia casuarinae (strain DSM 45818 / CECT 9043 / HFP020203 / CcI3).